A 232-amino-acid polypeptide reads, in one-letter code: Ribosomal RNA small subunit methyltransferase G (232 aa).

Residues Gly-75, Phe-80, Ala-126 to Glu-127, and Arg-143 each bind S-adenosyl-L-methionine.

Belongs to the methyltransferase superfamily. RNA methyltransferase RsmG family.

The protein localises to the cytoplasm. Its function is as follows. Specifically methylates the N7 position of a guanine in 16S rRNA. This Fusobacterium nucleatum subsp. nucleatum (strain ATCC 25586 / DSM 15643 / BCRC 10681 / CIP 101130 / JCM 8532 / KCTC 2640 / LMG 13131 / VPI 4355) protein is Ribosomal RNA small subunit methyltransferase G.